The chain runs to 347 residues: NADH-quinone oxidoreductase subunit H (347 aa).

The next 9 helical transmembrane spans lie at 13–33 (LLIL…VAYI), 50–70 (PNVV…KFVF), 82–102 (GVFL…WAVI), 115–135 (VGIL…IMAG), 161–181 (IGFV…TDIV), 198–218 (FLDW…ISAL), 248–268 (FLLF…LTTI), 286–306 (VPGV…FALV), and 321–341 (LGWK…AAFL).

It belongs to the complex I subunit 1 family. In terms of assembly, NDH-1 is composed of 14 different subunits. Subunits NuoA, H, J, K, L, M, N constitute the membrane sector of the complex.

It localises to the cell inner membrane. It carries out the reaction a quinone + NADH + 5 H(+)(in) = a quinol + NAD(+) + 4 H(+)(out). Functionally, NDH-1 shuttles electrons from NADH, via FMN and iron-sulfur (Fe-S) centers, to quinones in the respiratory chain. The immediate electron acceptor for the enzyme in this species is believed to be ubiquinone. Couples the redox reaction to proton translocation (for every two electrons transferred, four hydrogen ions are translocated across the cytoplasmic membrane), and thus conserves the redox energy in a proton gradient. This subunit may bind ubiquinone. This is NADH-quinone oxidoreductase subunit H from Chelativorans sp. (strain BNC1).